A 360-amino-acid chain; its full sequence is Photosystem II protein D1 2 (360 aa).

The next 3 membrane-spanning stretches (helical) occupy residues 29-46 (YIGW…AATT), 118-133 (HFLT…EWEL), and 142-156 (WICL…AATA). Histidine 118 lines the chlorophyll a pocket. Tyrosine 126 provides a ligand contact to pheophytin a. Residues aspartate 170 and glutamate 189 each contribute to the [CaMn4O5] cluster site. Residues 197–218 (FHMLGVAGVFGGSLFSAMHGSL) form a helical membrane-spanning segment. Histidine 198 is a binding site for chlorophyll a. Residues histidine 215 and 264–265 (SF) contribute to the a quinone site. Fe cation is bound at residue histidine 215. Histidine 272 is a Fe cation binding site. Residues 274–288 (FLAAWPVIGIWFTAL) form a helical membrane-spanning segment. [CaMn4O5] cluster contacts are provided by histidine 332, glutamate 333, aspartate 342, and alanine 344. The propeptide occupies 345-360 (AGEVAPVAISAPAING).

It belongs to the reaction center PufL/M/PsbA/D family. In terms of assembly, PSII is composed of 1 copy each of membrane proteins PsbA, PsbB, PsbC, PsbD, PsbE, PsbF, PsbH, PsbI, PsbJ, PsbK, PsbL, PsbM, PsbT, PsbX, PsbY, PsbZ, Psb30/Ycf12, peripheral proteins PsbO, CyanoQ (PsbQ), PsbU, PsbV and a large number of cofactors. It forms dimeric complexes. The D1/D2 heterodimer binds P680, chlorophylls that are the primary electron donor of PSII, and subsequent electron acceptors. It shares a non-heme iron and each subunit binds pheophytin, quinone, additional chlorophylls, carotenoids and lipids. D1 provides most of the ligands for the Mn4-Ca-O5 cluster of the oxygen-evolving complex (OEC). There is also a Cl(-1) ion associated with D1 and D2, which is required for oxygen evolution. The PSII complex binds additional chlorophylls, carotenoids and specific lipids. is required as a cofactor. Tyr-161 forms a radical intermediate that is referred to as redox-active TyrZ, YZ or Y-Z. Post-translationally, C-terminally processed by CtpA; processing is essential to allow assembly of the oxygen-evolving complex and thus photosynthetic growth.

It is found in the cellular thylakoid membrane. The catalysed reaction is 2 a plastoquinone + 4 hnu + 2 H2O = 2 a plastoquinol + O2. Photosystem II (PSII) is a light-driven water:plastoquinone oxidoreductase that uses light energy to abstract electrons from H(2)O, generating O(2) and a proton gradient subsequently used for ATP formation. It consists of a core antenna complex that captures photons, and an electron transfer chain that converts photonic excitation into a charge separation. The D1/D2 (PsbA/PsbD) reaction center heterodimer binds P680, the primary electron donor of PSII as well as several subsequent electron acceptors. This Nostoc sp. (strain PCC 7120 / SAG 25.82 / UTEX 2576) protein is Photosystem II protein D1 2.